The following is a 411-amino-acid chain: Arginine deiminase (411 aa).

Cys-401 acts as the Amidino-cysteine intermediate in catalysis.

Belongs to the arginine deiminase family. Glycosylated.

The protein localises to the cytoplasm. It carries out the reaction L-arginine + H2O = L-citrulline + NH4(+). It functions in the pathway amino-acid degradation; L-arginine degradation via ADI pathway; carbamoyl phosphate from L-arginine: step 1/2. The protein is Arginine deiminase of Streptococcus pyogenes serotype M3 (strain ATCC BAA-595 / MGAS315).